We begin with the raw amino-acid sequence, 526 residues long: WRKY transcription factor 72A (526 aa).

Basic and acidic residues-rich tracts occupy residues 40–52 (KERK…DDNS) and 60–76 (LTGD…KADM). Disordered regions lie at residues 40 to 76 (KERK…KADM) and 170 to 200 (SSTK…QTWP). A coiled-coil region spans residues 62-106 (GDKKDDQLESAKADMEEVMEENQRLKKHLDKIMKDYRNLQMQFHE). Residues 170–185 (SSTKSSPSNLSPENSL) are compositionally biased toward low complexity. Residues 232–298 (CDTPTMNDGC…YEGTHNHPLP (67 aa)) constitute a DNA-binding region (WRKY).

It belongs to the WRKY group II-b family. Expressed in roots, trichomes and fruits.

It is found in the nucleus. Transcription activator involved in the transcriptional regulation of terpene biosynthesis in glandular trichomes. Binds to the promoter of the linalool synthase TPS5 and promotes TPS5 gene transactivation. In association with WRKY72B, contributes to basal defense against root-knot nematodes (RKNs) and potato aphids, as well as Mi-1-mediated gene-for-gene resistance to these pests. Both WRKY72A and WRKY72B are not required for gene-for-gene resistance mediated by Pto, another tomato R gene. This chain is WRKY transcription factor 72A, found in Solanum lycopersicum (Tomato).